The primary structure comprises 158 residues: 2-C-methyl-D-erythritol 2,4-cyclodiphosphate synthase (158 aa).

Asp-9 and His-11 together coordinate a divalent metal cation. 4-CDP-2-C-methyl-D-erythritol 2-phosphate is bound by residues 9–11 and 35–36; these read DVH and HS. His-43 contributes to the a divalent metal cation binding site. 4-CDP-2-C-methyl-D-erythritol 2-phosphate is bound by residues 57–59, 62–66, 101–107, 133–136, Phe-140, and Arg-143; these read DIG, FPDTD, AQKPKMA, and TTTE.

Belongs to the IspF family. Homotrimer. A divalent metal cation is required as a cofactor.

The enzyme catalyses 4-CDP-2-C-methyl-D-erythritol 2-phosphate = 2-C-methyl-D-erythritol 2,4-cyclic diphosphate + CMP. It functions in the pathway isoprenoid biosynthesis; isopentenyl diphosphate biosynthesis via DXP pathway; isopentenyl diphosphate from 1-deoxy-D-xylulose 5-phosphate: step 4/6. Its function is as follows. Involved in the biosynthesis of isopentenyl diphosphate (IPP) and dimethylallyl diphosphate (DMAPP), two major building blocks of isoprenoid compounds. Catalyzes the conversion of 4-diphosphocytidyl-2-C-methyl-D-erythritol 2-phosphate (CDP-ME2P) to 2-C-methyl-D-erythritol 2,4-cyclodiphosphate (ME-CPP) with a corresponding release of cytidine 5-monophosphate (CMP). This Bacillus thuringiensis subsp. konkukian (strain 97-27) protein is 2-C-methyl-D-erythritol 2,4-cyclodiphosphate synthase.